The chain runs to 146 residues: Small ribosomal subunit protein bS6 (146 aa).

The segment at 100 to 146 is disordered; it reads QSAMMRKRDDDDRGDRPDRGDRGRGPRPDRPPRRPRDDAAASDEGGF. The span at 105-138 shows a compositional bias: basic and acidic residues; the sequence is RKRDDDDRGDRPDRGDRGRGPRPDRPPRRPRDDA.

It belongs to the bacterial ribosomal protein bS6 family.

Functionally, binds together with bS18 to 16S ribosomal RNA. The chain is Small ribosomal subunit protein bS6 from Methylocella silvestris (strain DSM 15510 / CIP 108128 / LMG 27833 / NCIMB 13906 / BL2).